The following is a 267-amino-acid chain: Hydroxyethylthiazole kinase 2 (267 aa).

Met-41 contacts substrate. 2 residues coordinate ATP: Lys-116 and Thr-166. Gly-193 is a binding site for substrate.

This sequence belongs to the Thz kinase family. The cofactor is Mg(2+).

It carries out the reaction 5-(2-hydroxyethyl)-4-methylthiazole + ATP = 4-methyl-5-(2-phosphooxyethyl)-thiazole + ADP + H(+). It functions in the pathway cofactor biosynthesis; thiamine diphosphate biosynthesis; 4-methyl-5-(2-phosphoethyl)-thiazole from 5-(2-hydroxyethyl)-4-methylthiazole: step 1/1. Functionally, catalyzes the phosphorylation of the hydroxyl group of 4-methyl-5-beta-hydroxyethylthiazole (THZ). This Streptococcus pneumoniae (strain 70585) protein is Hydroxyethylthiazole kinase 2.